A 270-amino-acid polypeptide reads, in one-letter code: 5-amino-6-(5-phospho-D-ribitylamino)uracil phosphatase YitU (270 aa).

The Nucleophile role is filled by Asp-11. Residue Asp-11 participates in Mg(2+) binding. Residue Leu-12 coordinates phosphate. Residue Asp-13 participates in Mg(2+) binding. Residues 45–46 and Lys-197 each bind phosphate; that span reads TG. Asp-220 is a Mg(2+) binding site. A phosphate-binding site is contributed by Asn-223.

The protein belongs to the HAD-like hydrolase superfamily. Cof family. Requires Mg(2+) as cofactor.

It catalyses the reaction 5-amino-6-(5-phospho-D-ribitylamino)uracil + H2O = 5-amino-6-(D-ribitylamino)uracil + phosphate. Its pathway is cofactor biosynthesis; riboflavin biosynthesis; 5-amino-6-(D-ribitylamino)uracil from GTP: step 4/4. In terms of biological role, catalyzes the dephosphorylation of the riboflavin precursor 5-amino-6-(5-phospho-D-ribitylamino)uracil and of flavin mononucleotide (FMN) in vitro. The chain is 5-amino-6-(5-phospho-D-ribitylamino)uracil phosphatase YitU (yitU) from Bacillus subtilis (strain 168).